The following is a 335-amino-acid chain: Phosphate acyltransferase (335 aa).

Belongs to the PlsX family. As to quaternary structure, homodimer. Probably interacts with PlsY.

It is found in the cytoplasm. The enzyme catalyses a fatty acyl-[ACP] + phosphate = an acyl phosphate + holo-[ACP]. The protein operates within lipid metabolism; phospholipid metabolism. In terms of biological role, catalyzes the reversible formation of acyl-phosphate (acyl-PO(4)) from acyl-[acyl-carrier-protein] (acyl-ACP). This enzyme utilizes acyl-ACP as fatty acyl donor, but not acyl-CoA. This is Phosphate acyltransferase from Streptococcus pyogenes serotype M1.